We begin with the raw amino-acid sequence, 1177 residues long: MALANGGEDRMDDSSSGRTSLADSASLTNSSLRSGTSSQSIHTNDGTIRVFNFTTGEFERFHPNMLCEEICNTMCRQLGIAPIAQLLYGIREHSTSRRPSPLVRLDLTWCLPGERLNCQLVYCFRMRFRVPELDSQLELIDGRSHKFLYRQMRYDMRTEQIPEIRYPEHKDKSTGLAVMDMLIDDQEQSEDQQAMRSIEKLYKLYLPPSLWRAHSFFVGSKIREVFRSLKANSLSVERLKWHYVHQVSHLAPTYMTEQFTCTVQYLPNEEVARGSGPIGTSLAHSTSTLASSGSTNTLSTLTTNTNSVALGGSGKKAKRRSTSGGIDVYVRVFPHDSLEPGLKVARVTSEATLKWILVGAVEGIFMISKINDTSVRLEIVGLPKGYEMQFQTEKEMKSFISYLGIYIRLSSKWMQDLCHSYRTPSLEELSSLHCHGPIGGAYSLMKLHENGDKCGSYIVRECDREYNIYYIDINTKIMAKKTDQERCKTETFRIVRKDSQWKLSYNNGEHVLNSLHEVAHIIQADSPDRYRIPASKYDKPPLLLLLLPKNLKAKKTDLQLSEAELQRRNPQIFNPRTDLQWYPDSISLSDDGMMFTMRGDWIQQSPVKDVSVTMKMLKSDGNFMEFFRLAQTWSLIQSPQFLKLYGLTLADPYTMVMEYSRYGPLNKFLHSMPNVTLHCLLDLMHGLVRGMHYLEDNKIIHNYIRCSNLYVTKYDPNSYVLDAKISDPGYPRPYRESDSPWIPVKYYRNLQAAKTDQFAQLWAFATTIYEIFSRCKEDLSTLRQEQLLRQKNLDGNILKMLDQDICPAPIFETIMDGWSDDETKRFSHHDIFSRLNTIKAEILPNYMPPPEIATNGTGDETVIDRSDIPFLPFPRSNMLMVIPLTSECRVIYNMENMIGRGHYGTVYKGHLEFNDKDQPREQVAIKMLNTMQVSTDFHREIGIMRTLSHPNIVKFKYWAEKSHCIIMEYLQSGSFDIYLRFTAPNLNNPRLVSFALDIANGMKYLSDMGLIHRDLAARNILVDHNGDGDCVKISDFGLAQFANSDGYYYAKSKRDIPIRWYSPEAISTCRFSSYSDVWSYGVTLFEMFSRGEEPNLVPIQTSQEDFLNRLQSGERLNRPASCPDFIYDLMQLCWHATPRSRPSFATIVDIITREVATKVTHPTDGHQSPPNQPTDAE.

The tract at residues 1-41 (MALANGGEDRMDDSSSGRTSLADSASLTNSSLRSGTSSQSI) is disordered. Over residues 16–41 (SGRTSLADSASLTNSSLRSGTSSQSI) the composition is skewed to polar residues. Ser-40 and Ser-321 each carry phosphoserine. Residues 46-414 (GTIRVFNFTT…IYIRLSSKWM (369 aa)) form the FERM domain. Residues 433–539 (HCHGPIGGAY…YRIPASKYDK (107 aa)) enclose the SH2; atypical domain. Protein kinase domains lie at 582–843 (YPDS…AEIL) and 892–1164 (YNME…HPTD). ATP is bound by residues 898–906 (IGRGHYGTV) and Lys-926. The active-site Proton acceptor is Asp-1014. 2 positions are modified to phosphotyrosine; by autocatalysis: Tyr-1047 and Tyr-1048. The disordered stretch occupies residues 1158–1177 (KVTHPTDGHQSPPNQPTDAE).

Belongs to the protein kinase superfamily. Tyr protein kinase family. JAK subfamily. Forms a complex with Hsp83 and piwi; probably Hop mediates the interaction between piwi and Hsp83.

Its subcellular location is the endomembrane system. The enzyme catalyses L-tyrosyl-[protein] + ATP = O-phospho-L-tyrosyl-[protein] + ADP + H(+). In terms of biological role, tyrosine kinase of the non-receptor type, phosphorylates the marelle protein. Required maternally for the establishment of the normal array of embryonic segments: involved in the control of pair-rule gene transcription in a stripe-specific manner. Together with Hsp83 and piwi, mediates canalization, also known as developmental robustness, likely via epigenetic silencing of existing genetic variants and suppression of transposon-induced new genetic variation. This chain is Tyrosine-protein kinase hopscotch (hop), found in Drosophila melanogaster (Fruit fly).